Here is a 354-residue protein sequence, read N- to C-terminus: Uroporphyrinogen decarboxylase (354 aa).

Substrate-binding positions include 27 to 31 (RQAGR), Asp-77, Tyr-153, Thr-208, and His-326.

It belongs to the uroporphyrinogen decarboxylase family. In terms of assembly, homodimer.

Its subcellular location is the cytoplasm. The enzyme catalyses uroporphyrinogen III + 4 H(+) = coproporphyrinogen III + 4 CO2. It participates in porphyrin-containing compound metabolism; protoporphyrin-IX biosynthesis; coproporphyrinogen-III from 5-aminolevulinate: step 4/4. In terms of biological role, catalyzes the decarboxylation of four acetate groups of uroporphyrinogen-III to yield coproporphyrinogen-III. The sequence is that of Uroporphyrinogen decarboxylase from Neisseria gonorrhoeae (strain NCCP11945).